Consider the following 384-residue polypeptide: GTPase Obg (384 aa).

One can recognise an Obg domain in the interval 1-159; the sequence is MKFVDEVEIR…RPLKLELMLL (159 aa). Positions 72 to 94 are disordered; sequence NGMGKNCTGRRGNDIVLPVPPGT. One can recognise an OBG-type G domain in the interval 160–333; it reads ADVGLLGMPN…LCREVMSYLE (174 aa). GTP contacts are provided by residues 166 to 173, 191 to 195, 213 to 216, 283 to 286, and 314 to 316; these read GMPNAGKS, FTTLI, DIPG, NKVD, and AAL. Positions 173 and 193 each coordinate Mg(2+). The tract at residues 358–384 is disordered; sequence EEVLEEEMDDEDDDDDDDHDVEVIYQK. A compositionally biased stretch (acidic residues) spans 360–377; the sequence is VLEEEMDDEDDDDDDDHD.

Belongs to the TRAFAC class OBG-HflX-like GTPase superfamily. OBG GTPase family. As to quaternary structure, monomer. Mg(2+) serves as cofactor.

Its subcellular location is the cytoplasm. Functionally, an essential GTPase which binds GTP, GDP and possibly (p)ppGpp with moderate affinity, with high nucleotide exchange rates and a fairly low GTP hydrolysis rate. Plays a role in control of the cell cycle, stress response, ribosome biogenesis and in those bacteria that undergo differentiation, in morphogenesis control. This is GTPase Obg from Idiomarina loihiensis (strain ATCC BAA-735 / DSM 15497 / L2-TR).